Here is a 461-residue protein sequence, read N- to C-terminus: Homocitrate synthase (461 aa).

In terms of domain architecture, Pyruvate carboxyltransferase spans 4 to 259 (VGILDSTLRE…IEVVKLDKLQ (256 aa)). Position 12 (Arg12) interacts with 2-oxoglutarate. Glu13 contributes to the Mg(2+) binding site. 2-oxoglutarate-binding residues include His76, Arg136, and Thr170. His198 and His200 together coordinate Mg(2+). His292 serves as the catalytic Proton acceptor.

This sequence belongs to the alpha-IPM synthase/homocitrate synthase family. Homocitrate synthase LYS20/LYS21 subfamily. Mg(2+) serves as cofactor. Mn(2+) is required as a cofactor.

It catalyses the reaction acetyl-CoA + 2-oxoglutarate + H2O = (2R)-homocitrate + CoA + H(+). It functions in the pathway amino-acid biosynthesis; L-lysine biosynthesis via AAA pathway; L-alpha-aminoadipate from 2-oxoglutarate: step 1/5. Its function is as follows. Catalyzes the aldol-type condensation of 2-oxoglutarate with acetyl-CoA to yield homocitrate. Carries out the first step of the alpha-aminoadipate (AAA) lysine biosynthesis pathway. The protein is Homocitrate synthase of Saccharolobus solfataricus (strain ATCC 35092 / DSM 1617 / JCM 11322 / P2) (Sulfolobus solfataricus).